Consider the following 289-residue polypeptide: Lipoyl synthase (289 aa).

Residues Cys33, Cys38, Cys44, Cys59, Cys63, Cys66, and Ser274 each contribute to the [4Fe-4S] cluster site. One can recognise a Radical SAM core domain in the interval 45–263; the sequence is FAGGTATFLI…SQGESELGFL (219 aa).

It belongs to the radical SAM superfamily. Lipoyl synthase family. Requires [4Fe-4S] cluster as cofactor.

The protein resides in the cytoplasm. The enzyme catalyses [[Fe-S] cluster scaffold protein carrying a second [4Fe-4S](2+) cluster] + N(6)-octanoyl-L-lysyl-[protein] + 2 oxidized [2Fe-2S]-[ferredoxin] + 2 S-adenosyl-L-methionine + 4 H(+) = [[Fe-S] cluster scaffold protein] + N(6)-[(R)-dihydrolipoyl]-L-lysyl-[protein] + 4 Fe(3+) + 2 hydrogen sulfide + 2 5'-deoxyadenosine + 2 L-methionine + 2 reduced [2Fe-2S]-[ferredoxin]. It participates in protein modification; protein lipoylation via endogenous pathway; protein N(6)-(lipoyl)lysine from octanoyl-[acyl-carrier-protein]: step 2/2. In terms of biological role, catalyzes the radical-mediated insertion of two sulfur atoms into the C-6 and C-8 positions of the octanoyl moiety bound to the lipoyl domains of lipoate-dependent enzymes, thereby converting the octanoylated domains into lipoylated derivatives. This is Lipoyl synthase from Synechococcus sp. (strain RCC307).